A 357-amino-acid polypeptide reads, in one-letter code: O-methyltransferase pgmB (357 aa).

Position 206 (aspartate 206) interacts with S-adenosyl-L-methionine. Histidine 256 serves as the catalytic Proton acceptor.

The protein belongs to the class I-like SAM-binding methyltransferase superfamily. Cation-independent O-methyltransferase family.

It functions in the pathway pigment biosynthesis. It participates in secondary metabolite biosynthesis. O-methyltransferase; part of the gene cluster that mediates the biosynthesis of pleosporalin A, ascomycone A, as well as a third cryptic naphthoquinone derived pigment, all responsible for the coloration of conidia. Specifically methylates position C-6 of the pgmA product 3-acetonyl-1,6,8-trihydroxy-2-naphthaldehyde to yield fusarubinaldehyde. The pathway begins with the biosynthesis of the cyclized heptaketide 3-acetonyl-1,6,8-trihydroxy-2-naphthaldehyde by the NR-PKS pgmA. The C-6 hydroxyl group is further methylated by the O-methyltransferase pgmB to yield fusarubinaldehyde which is in turn oxidized by the cytochrome P450 monooxygenase pgmC at C-9. The C-1 hydroxyl group is then methylated spontaneously. Although pgmE, pgmD and pgmH are essential for the production of pleosporalin A, it is not the case for the 2 other final products and it remains difficult to assign a specific function to each enzyme. PgmF and pgmG seem not to be involved in pigment biosynthesis although they were regulated by the cluster-specific transcription factor pgmR. The sequence is that of O-methyltransferase pgmB from Aspergillus terreus (strain NIH 2624 / FGSC A1156).